Reading from the N-terminus, the 458-residue chain is Peptidyl-prolyl cis-trans isomerase FKBP4 (458 aa).

N-acetylmethionine; in peptidyl-prolyl cis-trans isomerase FKBP4; alternate is present on Met-1. The interval 1 to 24 (MTAEEMKAAENGAQSAPLPLEGVD) is disordered. N-acetylthreonine; in peptidyl-prolyl cis-trans isomerase FKBP4, N-terminally processed; partial is present on Thr-2. A PPIase FKBP-type 1 domain is found at 50 to 138 (GDRVFVHYTG…VFEVELFEFK (89 aa)). Thr-143 carries the post-translational modification Phosphothreonine; by CK2. The PPIase FKBP-type 2 domain occupies 167 to 253 (GAMVEVALEG…RYEVRLKSFE (87 aa)). Position 220 is a phosphotyrosine (Tyr-220). The tract at residues 267 to 400 (LEQSNIVKER…TQLAVCQQRT (134 aa)) is interaction with tubulin. 3 TPR repeats span residues 270–303 (SNIV…LEYE), 319–352 (LASH…DSNN), and 353–386 (EKGL…YPSN). Lys-282 bears the N6-acetyllysine mark. Arg-373 is modified (omega-N-methylarginine). Residues 428-458 (EVAAGDHPTDAEMKGERNNVAENQSRVETEA) are disordered. The segment covering 434–458 (HPTDAEMKGERNNVAENQSRVETEA) has biased composition (basic and acidic residues). The residue at position 436 (Thr-436) is a Phosphothreonine. Lys-441 participates in a covalent cross-link: Glycyl lysine isopeptide (Lys-Gly) (interchain with G-Cter in SUMO1). Position 452 is a phosphoserine (Ser-452).

Homodimer. Interacts with GLMN. Associates with HSP90AA1 and HSPA1A/HSPA1B in steroid hormone receptor complexes. Also interacts with peroxisomal phytanoyl-CoA alpha-hydroxylase (PHYH). Interacts with NR3C1 and dynein. Interacts with HSF1 in the HSP90 complex. Associates with tubulin. Interacts with MAPT/TAU. Interacts (via TPR domain) with S100A1, S100A2 and S100A6; the interaction is Ca(2+) dependent. Interaction with S100A1 and S100A2 (but not with S100A6) leads to inhibition of FKBP4-HSP90 interaction. Interacts with dynein; contributes to NR3C1 transport to the nucleus. In terms of processing, phosphorylation by CK2 results in loss of HSP90 binding activity.

It localises to the cytoplasm. The protein resides in the cytosol. It is found in the mitochondrion. The protein localises to the nucleus. Its subcellular location is the cytoskeleton. The enzyme catalyses [protein]-peptidylproline (omega=180) = [protein]-peptidylproline (omega=0). Inhibited by FK506. Immunophilin protein with PPIase and co-chaperone activities. Component of steroid receptors heterocomplexes through interaction with heat-shock protein 90 (HSP90). May play a role in the intracellular trafficking of heterooligomeric forms of steroid hormone receptors between cytoplasm and nuclear compartments. The isomerase activity controls neuronal growth cones via regulation of TRPC1 channel opening. Also acts as a regulator of microtubule dynamics by inhibiting MAPT/TAU ability to promote microtubule assembly. May have a protective role against oxidative stress in mitochondria. The chain is Peptidyl-prolyl cis-trans isomerase FKBP4 (Fkbp4) from Mus musculus (Mouse).